A 293-amino-acid chain; its full sequence is Kallikrein-5 (293 aa).

The N-terminal stretch at 1–22 is a signal peptide; that stretch reads MATARPPWMWVLCALITALLLG. A compositionally biased stretch (polar residues) spans 37–49; that stretch reads HPSNTVPSGSNQD. Residues 37–68 form a disordered region; sequence HPSNTVPSGSNQDLGAGAGEDARSDDSSSRII. A Peptidase S1 domain is found at 67–290; it reads IINGSDCDMH…FTKWIQETIQ (224 aa). An N-linked (GlcNAc...) asparagine glycan is attached at asparagine 69. Intrachain disulfides connect cysteine 73–cysteine 206, cysteine 93–cysteine 109, cysteine 178–cysteine 279, cysteine 185–cysteine 251, cysteine 217–cysteine 231, and cysteine 241–cysteine 266. Catalysis depends on charge relay system residues histidine 108 and aspartate 153. Asparagine 173 and asparagine 208 each carry an N-linked (GlcNAc...) asparagine glycan. Serine 245 acts as the Charge relay system in catalysis. An N-linked (GlcNAc...) asparagine glycan is attached at asparagine 252.

The protein belongs to the peptidase S1 family. Kallikrein subfamily. As to quaternary structure, interacts with SPINK9. Expressed in skin, breast, brain and testis. Expressed at the stratum granulosum of palmar skin.

The protein localises to the secreted. Inhibited by Zn2+. Its function is as follows. May be involved in desquamation. This Homo sapiens (Human) protein is Kallikrein-5.